Reading from the N-terminus, the 181-residue chain is Inner membrane-spanning protein YciB (181 aa).

The next 5 membrane-spanning stretches (helical) occupy residues 8-28, 53-73, 76-96, 121-141, and 149-169; these read FPIICFFVAYKFWGIYIATAA, ITLIFILLLGSFTLVFHNAIF, WKPTIVYWIFAIVLFGSHFFG, LSWALFFLILGVLNLFVVYNF, and FKLFGTLVLMLVFILGQAFYI.

This sequence belongs to the YciB family.

It is found in the cell inner membrane. In terms of biological role, plays a role in cell envelope biogenesis, maintenance of cell envelope integrity and membrane homeostasis. The polypeptide is Inner membrane-spanning protein YciB (Coxiella burnetii (strain CbuG_Q212) (Coxiella burnetii (strain Q212))).